We begin with the raw amino-acid sequence, 178 residues long: Prion-like protein doppel (178 aa).

The first 25 residues, 1 to 25, serve as a signal peptide directing secretion; that stretch reads MRKHLGGCWLAIVCILLFSQLCSVK. The flexible tail stretch occupies residues 27 to 50; that stretch reads RGIKHRIKWNRKVLPSTSQVTEAR. The interval 51–154 is globular; that stretch reads TAEIRPGAFI…KHCDFWLERG (104 aa). 2 cysteine pairs are disulfide-bonded: C94–C147 and C108–C142. N98 and N110 each carry an N-linked (GlcNAc...) asparagine glycan. The segment at 124–141 is cu(2+) binding; sequence KQDNKLYQRVLWQLIREL. The GPI-anchor amidated glycine moiety is linked to residue G154. Residues 155-178 constitute a propeptide, removed in mature form; it reads AGLRVTLDQPMMLCLLVFIWFIVK.

The protein belongs to the prion family. Post-translationally, N-glycosylated. In terms of processing, O-glycosylated. As to expression, strongly expressed in testis. Detected at low levels in ovary, spleen, kidney and mammary gland.

The protein resides in the cell membrane. In terms of biological role, required for normal acrosome reaction and for normal male fertility. Can bind Cu(2+). The protein is Prion-like protein doppel (PRND) of Bos taurus (Bovine).